The sequence spans 297 residues: Bifunctional protein FolD 1 (297 aa).

NADP(+)-binding positions include 174 to 176 (GRS), S199, and I240.

The protein belongs to the tetrahydrofolate dehydrogenase/cyclohydrolase family. Homodimer.

The catalysed reaction is (6R)-5,10-methylene-5,6,7,8-tetrahydrofolate + NADP(+) = (6R)-5,10-methenyltetrahydrofolate + NADPH. It catalyses the reaction (6R)-5,10-methenyltetrahydrofolate + H2O = (6R)-10-formyltetrahydrofolate + H(+). It participates in one-carbon metabolism; tetrahydrofolate interconversion. In terms of biological role, catalyzes the oxidation of 5,10-methylenetetrahydrofolate to 5,10-methenyltetrahydrofolate and then the hydrolysis of 5,10-methenyltetrahydrofolate to 10-formyltetrahydrofolate. The sequence is that of Bifunctional protein FolD 1 from Acinetobacter baylyi (strain ATCC 33305 / BD413 / ADP1).